The chain runs to 1710 residues: Chromodomain-helicase-DNA-binding protein 1 (1710 aa).

The segment covering 1–10 (MNGHSDEESV) has biased composition (basic and acidic residues). The disordered stretch occupies residues 1-252 (MNGHSDEESV…KEDEEMKTDS (252 aa)). A compositionally biased stretch (low complexity) spans 35–63 (SSGSSSDGSSSQSGSSDSDSGSESGSQSE). Basic and acidic residues predominate over residues 67-85 (DTSRENKVQAKPPKVDGAE). A compositionally biased stretch (low complexity) spans 105–121 (QQQQQQQQQHQASSNSG). Over residues 122 to 136 (SEEDSSSSEDSDDSS) the composition is skewed to acidic residues. The span at 152–163 (SGSGSPSQSGSD) shows a compositional bias: low complexity. The span at 187–210 (KVKSRKPQNRSKSKNGKKILGQKK) shows a compositional bias: basic residues. Serine 215 and serine 216 each carry phosphoserine. Residues 215–226 (SSEEDDDEEDYD) are compositionally biased toward acidic residues. At threonine 237 the chain carries Phosphothreonine. Position 241 is a phosphoserine (serine 241). The residue at position 250 (threonine 250) is a Phosphothreonine. The residue at position 252 (serine 252) is a Phosphoserine. Chromo domains are found at residues 272–364 (ETIE…RWLK) and 389–452 (QIVE…TPFK). Serine 471 carries the post-translational modification Phosphoserine. A Helicase ATP-binding domain is found at 493–663 (AHSWCKGNSC…WSLLHFIMPE (171 aa)). 506 to 513 (DEMGLGKT) contacts ATP. The DEAH box signature appears at 614–617 (DEAH). In terms of domain architecture, Helicase C-terminal spans 792–943 (LLDKLLIRLR…HLVIQRMDTT (152 aa)). 8 positions are modified to phosphoserine: serine 1025, serine 1040, serine 1081, serine 1085, serine 1096, serine 1098, serine 1100, and serine 1102. The tract at residues 1080 to 1120 (ISFNGSEGRRSRSRRYSGSDSDSISEGKRPKKRGRPRTIPR) is disordered. A compositionally biased stretch (basic residues) spans 1108–1117 (RPKKRGRPRT). At serine 1161 the chain carries Phosphoserine. Disordered regions lie at residues 1321–1408 (EALS…ESEE) and 1502–1710 (KKRQ…SRKT). Residues 1329–1345 (SKRRKARAKKNKAMKSI) show a composition bias toward basic residues. 7 positions are modified to phosphoserine: serine 1353, serine 1355, serine 1356, serine 1360, serine 1363, serine 1371, and serine 1373. A compositionally biased stretch (basic and acidic residues) spans 1370-1379 (LSESKSDGRE). The segment at 1409–1511 (LDQKTFSICK…KKRQESQQNS (103 aa)) is CHD1 helical C-terminal domain (CHCT). The segment covering 1507–1516 (SQQNSDQNSN) has biased composition (low complexity). 2 stretches are compositionally biased toward basic and acidic residues: residues 1523 to 1573 (RNPD…DSRK) and 1582 to 1670 (GKDH…DHRA). The residue at position 1622 (serine 1622) is a Phosphoserine. Tandem repeats lie at residues 1628–1632 (HSDHR), 1634–1638 (HSDHR), and 1640–1644 (HSDHR). Positions 1628 to 1644 (HSDHRSHSDHRLHSDHR) are 3 X 5 AA repeats of H-S-D-H-R. 3 positions are modified to phosphoserine: serine 1677, arginine 1688, and serine 1689. The segment covering 1690 to 1701 (PFEHSVEHKSTP) has biased composition (basic and acidic residues).

The protein belongs to the SNF2/RAD54 helicase family. Component of the SAGA complex. Interacts with BCLAF1, NCoR, SRP20 and SAFB. Specifically interacts with methylated H3K4me2 and H3K4me3. Interacts with the FACT complex, the PAF complex and the U2 snRNP. Interacts directly with PAF1, SFA3A1, SFA3A2, SFA3A3, SNF2 and SSRP1. As to expression, expressed in many tissues including in the brain, where the highest level of expression is found in the cerebellum and basal ganglia.

The protein resides in the nucleus. It is found in the cytoplasm. The enzyme catalyses ATP + H2O = ADP + phosphate + H(+). Its function is as follows. ATP-dependent chromatin-remodeling factor which functions as substrate recognition component of the transcription regulatory histone acetylation (HAT) complex SAGA. Regulates polymerase II transcription. Also required for efficient transcription by RNA polymerase I, and more specifically the polymerase I transcription termination step. Regulates negatively DNA replication. Not only involved in transcription-related chromatin-remodeling, but also required to maintain a specific chromatin configuration across the genome. Is also associated with histone deacetylase (HDAC) activity. Required for the bridging of SNF2, the FACT complex, the PAF complex as well as the U2 snRNP complex to H3K4me3. Functions to modulate the efficiency of pre-mRNA splicing in part through physical bridging of spliceosomal components to H3K4me3. Required for maintaining open chromatin and pluripotency in embryonic stem cells. This chain is Chromodomain-helicase-DNA-binding protein 1, found in Homo sapiens (Human).